A 238-amino-acid chain; its full sequence is 2-C-methyl-D-erythritol 4-phosphate cytidylyltransferase (238 aa).

The protein belongs to the IspD/TarI cytidylyltransferase family. IspD subfamily.

It catalyses the reaction 2-C-methyl-D-erythritol 4-phosphate + CTP + H(+) = 4-CDP-2-C-methyl-D-erythritol + diphosphate. The protein operates within isoprenoid biosynthesis; isopentenyl diphosphate biosynthesis via DXP pathway; isopentenyl diphosphate from 1-deoxy-D-xylulose 5-phosphate: step 2/6. Catalyzes the formation of 4-diphosphocytidyl-2-C-methyl-D-erythritol from CTP and 2-C-methyl-D-erythritol 4-phosphate (MEP). This chain is 2-C-methyl-D-erythritol 4-phosphate cytidylyltransferase, found in Alteromonas mediterranea (strain DSM 17117 / CIP 110805 / LMG 28347 / Deep ecotype).